The primary structure comprises 404 residues: MSVHHKKKLMPKSALLIRKYQKGIRSSFIGLIIVLSFLFFMSGSRSPEVPIAQGTSVSRVASKDYLMPFTDKSQGVIHPVDDGKKEKGVMVTLARNSDLWNLVKSIRHVEDRFNNRYHYDWVFLNDQPFSDEFKRVTSALVSGKAKYGTIPKDHWSIPSWIDTEKFDEKRLAMGKLDIPYGSSVPYRHMCRFQSGFIWRHPLLEEYEWFWRVDTDITLFCDIQYDIFKFLKVNNKKYGFILSVSEYERTIPTLWETTKKFIKKNPKFLHKNNLMKFISNDDGDTYNMCHFWTNFEIGSLDFFRSDAYREYFDYLDSSGGFFYERWGDAPVHSIAASLFLDKSEIHFFDGLGFHHPDFTSCPIEQKIRLQNKCICEPSKDVTWTPDYFCTRKYFSAGNYKLPPGI.

Topologically, residues 1–27 (MSVHHKKKLMPKSALLIRKYQKGIRSS) are cytoplasmic. A helical; Signal-anchor for type II membrane protein transmembrane segment spans residues 28 to 44 (FIGLIIVLSFLFFMSGS). The segment at 45-83 (RSPEVPIAQGTSVSRVASKDYLMPFTDKSQGVIHPVDDG) is stem region. Topologically, residues 45–404 (RSPEVPIAQG…AGNYKLPPGI (360 aa)) are lumenal. The segment at 84-404 (KKEKGVMVTL…AGNYKLPPGI (321 aa)) is catalytic. The active-site Nucleophile is Glu295.

The protein belongs to the glycosyltransferase 15 family. Interacts with SVP26.

It is found in the membrane. Its function is as follows. Possible glycosyltransferase that transfers an alpha-D-mannosyl residue from GDP-mannose into lipid-linked oligosaccharide, forming an alpha-(1-&gt;2)-D-mannosyl-D-mannose linkage. In Saccharomyces cerevisiae (strain ATCC 204508 / S288c) (Baker's yeast), this protein is Probable mannosyltransferase KTR3 (KTR3).